The chain runs to 263 residues: Glutamate racemase (263 aa).

Substrate contacts are provided by residues 13–14 (DS) and 45–46 (YG). The active-site Proton donor/acceptor is the Cys-77. Residue 78–79 (NT) participates in substrate binding. Residue Cys-185 is the Proton donor/acceptor of the active site. 186-187 (TH) lines the substrate pocket.

It belongs to the aspartate/glutamate racemases family.

The enzyme catalyses L-glutamate = D-glutamate. It functions in the pathway cell wall biogenesis; peptidoglycan biosynthesis. Provides the (R)-glutamate required for cell wall biosynthesis. In Vibrio vulnificus (strain YJ016), this protein is Glutamate racemase.